The sequence spans 329 residues: Isopenicillin N synthase (329 aa).

Isopenicillin N-binding residues include Arg87, Tyr91, Ser183, and Tyr189. Residues Arg87, Tyr91, Ser183, Tyr189, His212, and Asp214 each contribute to the N-[(5S)-5-amino-5-carboxypentanoyl]-L-cysteinyl-D-valine site. Positions 180 to 286 constitute a Fe2OG dioxygenase domain; it reads SLSSVSLIRY…RLSLPFFLNG (107 aa). Fe(2+) is bound by residues His212, Asp214, and His268. Residue Arg277 participates in 2-oxoglutarate binding. Ser279 contacts isopenicillin N. Ser279 contacts N-[(5S)-5-amino-5-carboxypentanoyl]-L-cysteinyl-D-valine.

Belongs to the iron/ascorbate-dependent oxidoreductase family. It depends on Fe cation as a cofactor. L-ascorbate is required as a cofactor.

The enzyme catalyses N-[(5S)-5-amino-5-carboxypentanoyl]-L-cysteinyl-D-valine + O2 = isopenicillin N + 2 H2O. It participates in antibiotic biosynthesis; penicillin G biosynthesis; penicillin G from L-alpha-aminoadipate and L-cysteine and L-valine: step 2/3. Removes, in the presence of oxygen, 4 hydrogen atoms from delta-L-(alpha-aminoadipyl)-L-cysteinyl-D-valine (ACV) to form the azetidinone and thiazolidine rings of isopenicillin. The protein is Isopenicillin N synthase (pcbC) of Streptomyces clavuligerus.